The chain runs to 226 residues: Lipoprotein-releasing system ATP-binding protein LolD (226 aa).

An ABC transporter domain is found at 6–226 (IELKSVERHY…TLADGKVVPL (221 aa)). 42 to 49 (APSGTGKS) is a binding site for ATP.

Belongs to the ABC transporter superfamily. Lipoprotein translocase (TC 3.A.1.125) family. As to quaternary structure, the complex is composed of two ATP-binding proteins (LolD) and two transmembrane proteins (LolC and LolE).

The protein localises to the cell inner membrane. Functionally, part of the ABC transporter complex LolCDE involved in the translocation of mature outer membrane-directed lipoproteins, from the inner membrane to the periplasmic chaperone, LolA. Responsible for the formation of the LolA-lipoprotein complex in an ATP-dependent manner. In Mesorhizobium japonicum (strain LMG 29417 / CECT 9101 / MAFF 303099) (Mesorhizobium loti (strain MAFF 303099)), this protein is Lipoprotein-releasing system ATP-binding protein LolD.